The primary structure comprises 301 residues: Fluoroquinolones export ATP-binding protein MT2762 (301 aa).

The ABC transporter domain occupies 18–246 (IRVRGLTFRY…RSRRRVRVEY (229 aa)). 52–59 (GPSGAGKS) serves as a coordination point for ATP.

The protein belongs to the ABC transporter superfamily. In terms of assembly, the complex is composed of 2 ATP-binding proteins and 2 transmembrane proteins.

Its subcellular location is the cell membrane. Functionally, part of the ABC transporter complex involved in fluoroquinolones export. Probably responsible for energy coupling to the transport system. The chain is Fluoroquinolones export ATP-binding protein MT2762 from Mycobacterium tuberculosis (strain CDC 1551 / Oshkosh).